A 1241-amino-acid chain; its full sequence is ATP-dependent helicase/nuclease subunit A (1241 aa).

Residues 12–485 (SQWTDDQWKA…IDLAKNFRSR (474 aa)) form the UvrD-like helicase ATP-binding domain. An ATP-binding site is contributed by 33 to 40 (AAAGSGKT). The UvrD-like helicase C-terminal domain maps to 505-805 (GEIDYDADAE…RIMTIHKSKG (301 aa)).

Belongs to the helicase family. AddA subfamily. Heterodimer of AddA and AddB/RexB. Mg(2+) serves as cofactor.

It catalyses the reaction Couples ATP hydrolysis with the unwinding of duplex DNA by translocating in the 3'-5' direction.. The enzyme catalyses ATP + H2O = ADP + phosphate + H(+). The heterodimer acts as both an ATP-dependent DNA helicase and an ATP-dependent, dual-direction single-stranded exonuclease. Recognizes the chi site generating a DNA molecule suitable for the initiation of homologous recombination. The AddA nuclease domain is required for chi fragment generation; this subunit has the helicase and 3' -&gt; 5' nuclease activities. This is ATP-dependent helicase/nuclease subunit A from Bacillus cereus (strain AH187).